The chain runs to 454 residues: DNA-binding protein (454 aa).

A disordered region spans residues 1–41; sequence MSHKKVVAISESSSDEEVPVAPPTAPPKKRQRKAVEEPRGH. A Phosphotyrosine; by host modification is found at Tyr129. Zn(2+)-binding residues include Cys213 and His215. The tract at residues 226–260 is flexible loop; that stretch reads VEMDVNSENAQRALKENPEKTKIVSNRWGRNVVQF. Cys268, Cys284, Cys325, Cys327, Cys378, and Cys394 together coordinate Zn(2+). The segment at 440–454 is C-terminal arm, DBP binding; the sequence is TILPQGQHDDDLVLF.

Belongs to the adenoviridae E2A DNA-binding protein family. In terms of assembly, homomultimerizes on viral ssDNA bound to pTP. Forms a initiation complex with viral polymerase, pTP and hosts NFIA and POU2F1/OCT1. Interacts with host SRCAP.

It is found in the host nucleus. Functionally, plays a role in the elongation phase of viral strand displacement replication by unwinding the template in an ATP-independent fashion, employing its capacity to form multimers. Also enhances the rate of initiation. Released from template upon second strand synthesis. Assembles in complex with viral pTP, viral pol, host NFIA and host POU2F1/OCT1 on viral origin of replication. Covers the whole ssDNA genome during synthesis. The complementary strand synthesis induces its relese from DNA template. May inhibit cellular transcription mediated by the interaction between host SRCAP and CBP. The polypeptide is DNA-binding protein (Canine adenovirus serotype 1 (strain CLL) (CAdV-1)).